The chain runs to 489 residues: Carboxyl-terminal-processing peptidase 1, chloroplastic (489 aa).

The segment covering 1 to 20 has biased composition (low complexity); sequence MRLLLPFSSPLSATSSPSTP. The segment at 1 to 27 is disordered; it reads MRLLLPFSSPLSATSSPSTPQFIPELP. Positions 189–273 constitute a PDZ domain; that stretch reads FSRMSKYDIT…TFVVLKVKHG (85 aa). Catalysis depends on charge relay system residues Ser-403 and Lys-428.

It belongs to the peptidase S41A family.

Its subcellular location is the plastid. The protein resides in the chloroplast thylakoid lumen. The enzyme catalyses The enzyme shows specific recognition of a C-terminal tripeptide, Xaa-Yaa-Zaa, in which Xaa is preferably Ala or Leu, Yaa is preferably Ala or Tyr, and Zaa is preferably Ala, but then cleaves at a variable distance from the C-terminus. A typical cleavage is -Ala-Ala-|-Arg-Ala-Ala-Lys-Glu-Asn-Tyr-Ala-Leu-Ala-Ala.. Protease involved in the C-terminal processing of the chloroplastic D1 protein of photosystem II. This proteolytic processing is necessary to allow the light-driven assembly of the tetranuclear manganese cluster, which is responsible for photosynthetic water oxidation. The sequence is that of Carboxyl-terminal-processing peptidase 1, chloroplastic (CTPA1) from Arabidopsis thaliana (Mouse-ear cress).